We begin with the raw amino-acid sequence, 132 residues long: Protein NrdI (132 aa).

This sequence belongs to the NrdI family.

Its function is as follows. Probably involved in ribonucleotide reductase function. This Bartonella quintana (strain Toulouse) (Rochalimaea quintana) protein is Protein NrdI.